A 133-amino-acid polypeptide reads, in one-letter code: Homeobox protein BarH-like 2 (133 aa).

Residues 1-46 (ELEKEFQKQKYLSTPDRLDLAQSLGLTQLQVKTWYQNRRMKWKKMV) constitute a DNA-binding region (homeobox). The interval 45–133 (MVLKGGQEAP…VTSPEPPPSS (89 aa)) is disordered.

It belongs to the BAR homeobox family. As to expression, expressed in keratinizing epithelia such as wool follicle, tongue and esophagus. Expressed at low level in thymus. Not detected in spleen, skeletal muscle, brain, heart kidney, liver and lung.

It localises to the nucleus. Functionally, transcription factor. Binds optimally to the DNA consensus sequence 5'-YYTAATGRTTTTY-3'. May control the expression of neural adhesion molecules such as L1 or Ng-CAM during embryonic development of both the central and peripherical nervous system. May be involved in controlling adhesive processes in keratinizing epithelia. The chain is Homeobox protein BarH-like 2 (BARX2) from Ovis aries (Sheep).